A 117-amino-acid chain; its full sequence is Pterin-4-alpha-carbinolamine dehydratase 2 (117 aa).

An N6-acetyllysine; alternate mark is found at Lys-101, Lys-105, and Lys-112. Lys-101, Lys-105, and Lys-112 each carry N6-succinyllysine; alternate.

This sequence belongs to the pterin-4-alpha-carbinolamine dehydratase family. As to quaternary structure, homotetramer. Interacts with DYRK1B.

The catalysed reaction is (4aS,6R)-4a-hydroxy-L-erythro-5,6,7,8-tetrahydrobiopterin = (6R)-L-erythro-6,7-dihydrobiopterin + H2O. Functionally, involved in tetrahydrobiopterin biosynthesis. Seems to both prevent the formation of 7-pterins and accelerate the formation of quinonoid-BH2. Its function is as follows. Regulates the dimerization of homeodomain protein HNF-1-alpha and enhances its transcriptional activity. The sequence is that of Pterin-4-alpha-carbinolamine dehydratase 2 (PCBD2) from Pongo abelii (Sumatran orangutan).